Here is a 431-residue protein sequence, read N- to C-terminus: Indole diterpene prenyltransferase nodD1 (431 aa).

L-tryptophan is bound at residue F85–I86. Residues R107, K194, R268, K270, Y272, and Y353 each contribute to the substrate site.

Belongs to the tryptophan dimethylallyltransferase family.

It functions in the pathway secondary metabolite biosynthesis. Its function is as follows. Indole diterpene prenyltransferase; part of the gene cluster that mediates the biosynthesis of the indole diterpenes nodulisporic acids (NA). Nodulisporic acid A (NAA) and its chemically modified derivatives are of particular significance because of their highly potent insecticidal activity against blood-feeding arthropods and lack of observable adverse effects on mammals, in particular the tremogenicity associated with the paspaline-derived IDTs is not observed. The geranylgeranyl diphosphate (GGPP) synthase ggs1, localized outside of the cluster, is proposed to catalyze the first step in nodulisporic acid biosynthesis via conversion of farnesyl pyrophosphate and isopentyl pyrophosphate into geranylgeranyl pyrophosphate (GGPP). Condensation of indole-3-glycerol phosphate with GGPP by the prenyl transferase nodC then forms 3-geranylgeranylindole (3-GGI). Epoxidation by the FAD-dependent monooxygenase nodM leads to a single-epoxidized-GGI that is substrate of the terpene cyclase nodB for cyclization to yield emindole SB. The terminal methyl carbon, C28, of emindole SB is then oxidized by the cytochrome P450 monooxygenase nodW to produce nodulisporic acid F (NAF), the pentacyclic core of NAA. NAF is converted to nodulisporic acid E (NAE) via prenylation. This step is probably performed by one of the indole diterpene prenyltransferases nodD1 or nodD2. Several oxidation steps performed by the FAD-linked oxidoreductase nodO and one of the cytochrome P450 monooxygenase nodR, nodX or nodZ further convert NAE to nodulisporic acid D (NAD). NAD is substrate of cytochrome P450 monooxygenase nodJ to produce the precursor of nodulisporic acid C (NAC), converted to NAC by one of the indole diterpene prenyltransferases nodD1 or nodD2. The FAD-dependent monooxygenase nodY2 then oxidizes NAC to nodulisporic acid B (NAB). Finally NAB is converted to NAA by one of the cytochrome P450 monooxygenases nodR, nodX or nodZ. This chain is Indole diterpene prenyltransferase nodD1, found in Hypoxylon pulicicidum.